The chain runs to 281 residues: Nucleoid occlusion protein (281 aa).

A DNA-binding region (H-T-H motif) is located at residues 145–164; the sequence is EALAQRLGKGQSTIANKLRL.

Belongs to the ParB family.

Its subcellular location is the cytoplasm. The protein resides in the nucleoid. Its function is as follows. Effects nucleoid occlusion by binding relatively nonspecifically to DNA and preventing the assembly of the division machinery in the vicinity of the nucleoid, especially under conditions that disturb the cell cycle. It helps to coordinate cell division and chromosome segregation by preventing the formation of the Z ring through the nucleoid, which would cause chromosome breakage. The chain is Nucleoid occlusion protein from Geobacillus sp. (strain WCH70).